The sequence spans 205 residues: Holliday junction branch migration complex subunit RuvA (205 aa).

Positions 1-64 (MIGKLTGLVD…EDAIRLFGFP (64 aa)) are domain I. The segment at 65-143 (SEVERDWFRL…ALGPVDSLTA (79 aa)) is domain II. The tract at residues 144 to 153 (KLTIAEAEGT) is flexible linker. The domain III stretch occupies residues 153-205 (TAPVAAQDAITALVNLGYGRPQAAAAVATSLEALGETAPLADLIRRGLKELAR).

This sequence belongs to the RuvA family. In terms of assembly, homotetramer. Forms an RuvA(8)-RuvB(12)-Holliday junction (HJ) complex. HJ DNA is sandwiched between 2 RuvA tetramers; dsDNA enters through RuvA and exits via RuvB. An RuvB hexamer assembles on each DNA strand where it exits the tetramer. Each RuvB hexamer is contacted by two RuvA subunits (via domain III) on 2 adjacent RuvB subunits; this complex drives branch migration. In the full resolvosome a probable DNA-RuvA(4)-RuvB(12)-RuvC(2) complex forms which resolves the HJ.

The protein localises to the cytoplasm. Its function is as follows. The RuvA-RuvB-RuvC complex processes Holliday junction (HJ) DNA during genetic recombination and DNA repair, while the RuvA-RuvB complex plays an important role in the rescue of blocked DNA replication forks via replication fork reversal (RFR). RuvA specifically binds to HJ cruciform DNA, conferring on it an open structure. The RuvB hexamer acts as an ATP-dependent pump, pulling dsDNA into and through the RuvAB complex. HJ branch migration allows RuvC to scan DNA until it finds its consensus sequence, where it cleaves and resolves the cruciform DNA. The polypeptide is Holliday junction branch migration complex subunit RuvA (Beijerinckia indica subsp. indica (strain ATCC 9039 / DSM 1715 / NCIMB 8712)).